The sequence spans 340 residues: Immunoglobulin-binding protein 1 family member C (340 aa).

Disordered regions lie at residues 223–243 (KDSS…PPMK) and 292–340 (PEEF…QNMG). Residues 303–314 (EDQEKEEEDDEQ) show a composition bias toward acidic residues. The segment covering 318–330 (RAREWDDWKDTHP) has biased composition (basic and acidic residues).

It belongs to the IGBP1/TAP42 family.

This Homo sapiens (Human) protein is Immunoglobulin-binding protein 1 family member C.